Reading from the N-terminus, the 484-residue chain is Glycogen synthase (484 aa).

Lys-15 contacts ADP-alpha-D-glucose.

It belongs to the glycosyltransferase 1 family. Bacterial/plant glycogen synthase subfamily.

The enzyme catalyses [(1-&gt;4)-alpha-D-glucosyl](n) + ADP-alpha-D-glucose = [(1-&gt;4)-alpha-D-glucosyl](n+1) + ADP + H(+). Its pathway is glycan biosynthesis; glycogen biosynthesis. Functionally, synthesizes alpha-1,4-glucan chains using ADP-glucose. This chain is Glycogen synthase, found in Geotalea daltonii (strain DSM 22248 / JCM 15807 / FRC-32) (Geobacter daltonii).